Reading from the N-terminus, the 328-residue chain is Beta-ketoacyl-[acyl-carrier-protein] synthase III (328 aa).

Active-site residues include cysteine 122 and histidine 255. The tract at residues 256–260 (QANVR) is ACP-binding. Asparagine 285 is a catalytic residue.

This sequence belongs to the thiolase-like superfamily. FabH family. In terms of assembly, homodimer.

Its subcellular location is the cytoplasm. It carries out the reaction malonyl-[ACP] + acetyl-CoA + H(+) = 3-oxobutanoyl-[ACP] + CO2 + CoA. The protein operates within lipid metabolism; fatty acid biosynthesis. Its function is as follows. Catalyzes the condensation reaction of fatty acid synthesis by the addition to an acyl acceptor of two carbons from malonyl-ACP. Catalyzes the first condensation reaction which initiates fatty acid synthesis and may therefore play a role in governing the total rate of fatty acid production. Possesses both acetoacetyl-ACP synthase and acetyl transacylase activities. Its substrate specificity determines the biosynthesis of branched-chain and/or straight-chain of fatty acids. In Bordetella avium (strain 197N), this protein is Beta-ketoacyl-[acyl-carrier-protein] synthase III.